The chain runs to 186 residues: Large ribosomal subunit protein uL15 (186 aa).

The segment at 1 to 48 (MDLSSLRPAKGAVKARKRVGRGPGSGNGTTAGKGNKGQQSRSGYQRPV) is disordered. Residues 21 to 35 (RGPGSGNGTTAGKGN) are compositionally biased toward gly residues.

It belongs to the universal ribosomal protein uL15 family. In terms of assembly, part of the 50S ribosomal subunit.

Its function is as follows. Binds to the 23S rRNA. This is Large ribosomal subunit protein uL15 from Chlorobaculum tepidum (strain ATCC 49652 / DSM 12025 / NBRC 103806 / TLS) (Chlorobium tepidum).